The following is a 295-amino-acid chain: Small ribosomal subunit protein uS2 (295 aa).

N-acetylserine is present on Ser2. Ser43 carries the phosphoserine modification. Lys52 carries the N6-acetyllysine modification. The segment at 54–113 (TWEKLLLAARAIVAIENPADVSVISSRNTGQRAVLKFAAATGATPIAGRFTPGTFTNQIQ) is interaction with PPP1R16B. Lys89 bears the N6-acetyllysine; alternate mark. Residue Lys89 forms a Glycyl lysine isopeptide (Lys-Gly) (interchain with G-Cter in SUMO2); alternate linkage. Thr97 is subject to Phosphothreonine. Laminin-binding regions lie at residues 161-180 (IPCNNKGAHSVGLMWWMLAR) and 205-229 (RDPEEIEKEEQAAAEKAVTKEEFQG). [DE]-W-[ST] repeat units follow at residues 230–232 (EWT), 247–249 (DWS), 266–268 (DWS), 275–277 (DWS), and 293–295 (EWS). The laminin-binding stretch occupies residues 242–295 (QPEVADWSEGVQVPSVPIQQFPTEDWSAQPATEDWSAAPTAQATEWVGATTEWS). Residues 266–295 (DWSAQPATEDWSAAPTAQATEWVGATTEWS) form a disordered region.

This sequence belongs to the universal ribosomal protein uS2 family. In terms of assembly, monomer (37LRP) and homodimer (67LR). Component of the small ribosomal subunit. Mature ribosomes consist of a small (40S) and a large (60S) subunit. The 40S subunit contains about 33 different proteins and 1 molecule of RNA (18S). The 60S subunit contains about 49 different proteins and 3 molecules of RNA (28S, 5.8S and 5S). Interacts with RPS21. Interacts with several laminins including at least LAMB1. Interacts with MDK. The mature dimeric form interacts with PPP1R16B (via its fourth ankyrin repeat). Interacts with PPP1CA only in the presence of PPP1R16B. In terms of processing, acylated. Acylation may be a prerequisite for conversion of the monomeric 37 kDa laminin receptor precursor (37LRP) to the mature dimeric 67 kDa laminin receptor (67LR), and may provide a mechanism for membrane association. Cleaved by stromelysin-3 (ST3) at the cell surface. Cleavage by stromelysin-3 may be a mechanism to alter cell-extracellular matrix interactions.

It localises to the cell membrane. Its subcellular location is the cytoplasm. The protein localises to the nucleus. Functionally, required for the assembly and/or stability of the 40S ribosomal subunit. Required for the processing of the 20S rRNA-precursor to mature 18S rRNA in a late step of the maturation of 40S ribosomal subunits. Also functions as a cell surface receptor for laminin. Plays a role in cell adhesion to the basement membrane and in the consequent activation of signaling transduction pathways. May play a role in cell fate determination and tissue morphogenesis. Also acts as a receptor for several other ligands, including the pathogenic prion protein, viruses, and bacteria. Acts as a PPP1R16B-dependent substrate of PPP1CA. This is Small ribosomal subunit protein uS2 from Chlorocebus aethiops (Green monkey).